We begin with the raw amino-acid sequence, 234 residues long: MSTPGDFSLSPFILGGAVDPRSMSQLGNICHADYMSTSTESQERSLNNPNDTHPEIVNVVSTFQLGVKLELRKIVQKARNAEYNPKRFAGAIMRISSPKSTALIFQTGKIVCTGTRSIEESKIASKKYAKIIKKIGYPIHYSNFNVQNIVGSCDVKFQIALRTLVDSYLAFCQYEPEVFPGLVYRMASPKVTLLVFSTGKVVLTGAKDEESLNLAYKNIYPILLANRKEDISNQ.

A run of 2 repeats spans residues 52–136 (THPE…KKIG) and 142–223 (SNFN…YPIL).

Belongs to the TBP family. Belongs to the TFIID complex together with the TBP-associated factors (TAFs). Binds DNA as monomer.

Its subcellular location is the nucleus. In terms of biological role, general transcription factor that functions at the core of the DNA-binding multiprotein factor TFIID. Binding of TFIID to the TATA box is the initial transcriptional step of the pre-initiation complex (PIC), playing a role in the activation of eukaryotic genes transcribed by RNA polymerase II. This chain is TATA-box-binding protein 1 (TBP), found in Entamoeba histolytica (strain ATCC 30459 / HM-1:IMSS / ABRM).